The sequence spans 262 residues: Putative hydro-lyase Cbei_2760 (262 aa).

The protein belongs to the D-glutamate cyclase family.

The protein is Putative hydro-lyase Cbei_2760 of Clostridium beijerinckii (strain ATCC 51743 / NCIMB 8052) (Clostridium acetobutylicum).